Reading from the N-terminus, the 2605-residue chain is Protein ABERRANT POLLEN TRANSMISSION 1 (2605 aa).

Positions 1 to 43 (MMLGLVQLLVGFVVAWEAVELVLRHGLLLSVFKLAILAALAAA) are cleaved as a signal peptide. Positions 137 to 158 (STNKKKPAPRKPISTTTAKAKG) are disordered. N-linked (GlcNAc...) asparagine glycans are attached at residues Asn-232, Asn-320, Asn-348, Asn-516, Asn-587, Asn-628, Asn-696, Asn-779, Asn-1171, Asn-1318, and Asn-1459. The segment at 305–326 (SASTVAEQKDEPSVDNKSAARS) is disordered. Basic and acidic residues predominate over residues 311–326 (EQKDEPSVDNKSAARS). The tract at residues 1761–1818 (MSKDGALSSVSSTSQPSEPQQIKSSESPPSNGSGKPDLTSSSENALKRSNNSDSEEEG) is disordered. Low complexity predominate over residues 1768–1781 (SSVSSTSQPSEPQQ). The span at 1782-1812 (IKSSESPPSNGSGKPDLTSSSENALKRSNNS) shows a compositional bias: polar residues. N-linked (GlcNAc...) asparagine glycans are attached at residues Asn-1791, Asn-1810, Asn-2003, Asn-2280, and Asn-2291. Disordered regions lie at residues 2269 to 2312 (VSTT…SSFD) and 2332 to 2361 (EGQTNTQYEPQDAAKDSKLLRPVRSTREDK). Residues 2281-2300 (TSVAETNSPNNQSSKETTFA) are compositionally biased toward polar residues. Composition is skewed to basic and acidic residues over residues 2303-2312 (PELRRTSSFD) and 2343-2361 (DAAKDSKLLRPVRSTREDK). 2 N-linked (GlcNAc...) asparagine glycosylation sites follow: Asn-2468 and Asn-2564. Positions 2574-2605 (TELEVAELPPRAPGYNTDSSSDSSSAETSPKD) are disordered.

This sequence belongs to the SABRE family. In terms of tissue distribution, mature pollen-specific.

The protein localises to the secreted. Its subcellular location is the golgi apparatus. May be involved in membrane trafficking. Required for tip growth in pollen tubes and root hairs. The sequence is that of Protein ABERRANT POLLEN TRANSMISSION 1 from Zea mays (Maize).